The sequence spans 200 residues: Inner membrane-spanning protein YciB (200 aa).

6 helical membrane-spanning segments follow: residues 1-21 (MPPLLKLALELGPLLVFFFAN), 37-57 (IGAPIFLATALFMAATVIALA), 66-86 (LPIMPLVSGIVVLVFGALTLW), 103-123 (LFGGILLGGLFFGKSLLGYVF), 136-156 (KLTLRWGLFFIFLAIVNEIVW), and 167-187 (FKVWGIMPITIVFTLLQMPLI).

This sequence belongs to the YciB family.

Its subcellular location is the cell inner membrane. In terms of biological role, plays a role in cell envelope biogenesis, maintenance of cell envelope integrity and membrane homeostasis. This Brucella suis biovar 1 (strain 1330) protein is Inner membrane-spanning protein YciB.